We begin with the raw amino-acid sequence, 928 residues long: DNA polymerase I (928 aa).

A 5'-3' exonuclease domain is found at 1-323 (MVQIPENPLI…IDESPSEPAA (323 aa)). The region spanning 324–517 (ALSYENYVTI…LHLKMWPELQ (194 aa)) is the 3'-5' exonuclease domain. A klenow fragment region spans residues 324-928 (ALSYENYVTI…GSGENWDQAH (605 aa)). The polymerase stretch occupies residues 521 to 928 (GPLNVFENIE…GSGENWDQAH (408 aa)).

This sequence belongs to the DNA polymerase type-A family. As to quaternary structure, single-chain monomer with multiple functions.

The catalysed reaction is DNA(n) + a 2'-deoxyribonucleoside 5'-triphosphate = DNA(n+1) + diphosphate. In addition to polymerase activity, this DNA polymerase exhibits 3'-5' and 5'-3' exonuclease activity. It is able to utilize nicked circular duplex DNA as a template and can unwind the parental DNA strand from its template. This is DNA polymerase I (polA) from Salmonella typhimurium (strain LT2 / SGSC1412 / ATCC 700720).